We begin with the raw amino-acid sequence, 710 residues long: Ent-copalyl diphosphate synthase 1 (710 aa).

Lysine 145 contributes to the substrate binding site. Positions 277 and 279 each coordinate Mg(2+). A DXDD motif motif is present at residues 277-280 (DIDD). Lysine 364 is a substrate binding site.

This sequence belongs to the terpene synthase family. Tpsc subfamily. Mg(2+) is required as a cofactor. Expressed in germinating seeds and leaves.

The catalysed reaction is (2E,6E,10E)-geranylgeranyl diphosphate = ent-copalyl diphosphate. It participates in plant hormone biosynthesis; gibberellin biosynthesis. Its pathway is secondary metabolite biosynthesis; terpenoid biosynthesis. Its function is as follows. Involved in the biosynthesis of ent-kaurene diterpenoids natural products such as oridonin, miltiradiene, eriocalyxin B and nezukol, known to exhibit antitumor, anti-inflammatory and antibacterial activities, and in the production of gibberellins phytohormones. Catalyzes the conversion of (2E,6E,10E)-geranylgeranyl diphosphate (GGPP) to ent-copalyl diphosphate (ent-CPP). This Isodon eriocalyx (Plectranthus eriocalyx) protein is Ent-copalyl diphosphate synthase 1.